The chain runs to 96 residues: Exodeoxyribonuclease 7 small subunit (96 aa).

Residues 73–96 (RAPEQSAANDVSAPGSAEEHDHGR) are disordered.

This sequence belongs to the XseB family. In terms of assembly, heterooligomer composed of large and small subunits.

The protein resides in the cytoplasm. The enzyme catalyses Exonucleolytic cleavage in either 5'- to 3'- or 3'- to 5'-direction to yield nucleoside 5'-phosphates.. Its function is as follows. Bidirectionally degrades single-stranded DNA into large acid-insoluble oligonucleotides, which are then degraded further into small acid-soluble oligonucleotides. This chain is Exodeoxyribonuclease 7 small subunit, found in Acidothermus cellulolyticus (strain ATCC 43068 / DSM 8971 / 11B).